A 405-amino-acid chain; its full sequence is Secreted aspartic protease FUS4 (405 aa).

The N-terminal stretch at 1 to 24 (MLAIATLHVALQVFGAFSLSHAAA) is a signal peptide. The region spanning 49-400 (YLFNVTVGSP…NFEERSFGLA (352 aa)) is the Peptidase A1 domain. Residues Asn-52, Asn-61, Asn-107, and Asn-123 are each glycosylated (N-linked (GlcNAc...) asparagine). A disulfide bridge connects residues Cys-318 and Cys-356.

The protein belongs to the peptidase A1 family.

Its subcellular location is the secreted. Secreted aspartic protease; part of the gene cluster that mediates the biosynthesis of the mycotoxin fusarin C. Within the cluster, FUS1, FUS2, FUS8 and FUS9 are sufficient for fusarin production. The other FUS cluster members are not essential for fusarin C biosynthesis. This is Secreted aspartic protease FUS4 from Gibberella fujikuroi (strain CBS 195.34 / IMI 58289 / NRRL A-6831) (Bakanae and foot rot disease fungus).